A 217-amino-acid chain; its full sequence is Polyadenylate-binding protein 3 (217 aa).

Positions 1–28 (MEEEEHEVYGGEIPEVGDTDVPDPDIDM) are disordered. Residues 15–28 (EVGDTDVPDPDIDM) show a composition bias toward acidic residues. Residues 30-71 (AADEDAVTELAEMKRRLKEMEEEAAALREMQAKVEKEMGATQ) adopt a coiled-coil conformation. The necessary for homooligomerization stretch occupies residues 75–216 (SMAANQEGKE…FRRPMRYMPY (142 aa)). The region spanning 89 to 165 (RSVYVGNVDY…RQLKVSPKRT (77 aa)) is the RRM domain. A Nuclear localization signal motif is present at residues 162–169 (PKRTNVPG).

As to quaternary structure, monomer and homooligomer. Binds RNA as a monomer and oligomerizes when bound to poly(A). Forms a complex with cleavage and polyadenylation specificity factor (CPSF) subunits PAPS4, PABN1, PABN2, CSTF50 and FIPS5. Interacts with CSP3.

Its subcellular location is the nucleus speckle. It localises to the cytoplasm. Its function is as follows. Involved in the 3'-end formation of mRNA precursors (pre-mRNA) by the addition of a poly(A) tail of 200-250 nt to the upstream cleavage product. Stimulates poly(A) polymerase (PAPOLA) conferring processivity on the poly(A) tail elongation reaction and also controls the poly(A) tail length. Increases the affinity of poly(A) polymerase for RNA. Binds to poly(A) and to poly(G) with high affinity. May protect the poly(A) tail from degradation. This is Polyadenylate-binding protein 3 from Arabidopsis thaliana (Mouse-ear cress).